A 203-amino-acid polypeptide reads, in one-letter code: Small ribosomal subunit protein uS4 (203 aa).

In terms of domain architecture, S4 RNA-binding spans 93-158 (LRLDNVVYRL…QQLVTRFLDL (66 aa)).

Belongs to the universal ribosomal protein uS4 family. Part of the 30S ribosomal subunit. Contacts protein S5. The interaction surface between S4 and S5 is involved in control of translational fidelity.

In terms of biological role, one of the primary rRNA binding proteins, it binds directly to 16S rRNA where it nucleates assembly of the body of the 30S subunit. Its function is as follows. With S5 and S12 plays an important role in translational accuracy. The sequence is that of Small ribosomal subunit protein uS4 from Akkermansia muciniphila (strain ATCC BAA-835 / DSM 22959 / JCM 33894 / BCRC 81048 / CCUG 64013 / CIP 107961 / Muc).